We begin with the raw amino-acid sequence, 797 residues long: Cleavage factor two protein 2 (797 aa).

2 disordered regions span residues 519 to 557 and 677 to 703; these read ENDSDDNALSNSNGKRKWSEINDGLQQKKEEEDEDEVPS and PSEEEDKKEEVEKKDGDKERNEEKKEE. The span at 684–703 shows a compositional bias: basic and acidic residues; that stretch reads KEEVEKKDGDKERNEEKKEE.

Component of the cleavage and polyadenylation factor (CPF) complex, which is composed of cft1, cft2, ysh1, pta1, swd2, pfs2, dis2, yth1, ssu72, and fip1.

The protein localises to the nucleus. RNA-binding component of the cleavage and polyadenylation factor (CPF) complex, which plays a key role in polyadenylation-dependent pre-mRNA 3'-end formation and cooperates with cleavage factors including the CFIA complex and NAB4/CFIB. May be involved in poly(A)-site recognition. May be involved in the association of the CPF, CPFIA and RNA polymerase II complexes. The chain is Cleavage factor two protein 2 (cft2) from Schizosaccharomyces pombe (strain 972 / ATCC 24843) (Fission yeast).